The primary structure comprises 124 residues: Small ribosomal subunit protein uS12 (124 aa).

Residues 1 to 30 form a disordered region; that stretch reads MPTIQQLVRKGRRDKVAKVKTAALKGSPQR. Position 89 is a 3-methylthioaspartic acid (D89). Residues 105–124 are disordered; the sequence is QGVKNRKQARSRYGAKKEKS. The segment covering 108-118 has biased composition (basic residues); sequence KNRKQARSRYG.

It belongs to the universal ribosomal protein uS12 family. In terms of assembly, part of the 30S ribosomal subunit. Contacts proteins S8 and S17. May interact with IF1 in the 30S initiation complex.

With S4 and S5 plays an important role in translational accuracy. Functionally, interacts with and stabilizes bases of the 16S rRNA that are involved in tRNA selection in the A site and with the mRNA backbone. Located at the interface of the 30S and 50S subunits, it traverses the body of the 30S subunit contacting proteins on the other side and probably holding the rRNA structure together. The combined cluster of proteins S8, S12 and S17 appears to hold together the shoulder and platform of the 30S subunit. This chain is Small ribosomal subunit protein uS12, found in Mycobacterium intracellulare.